Consider the following 293-residue polypeptide: MPSQPSSQDKAKILAEALPYIQRFHGKTIVIKYGGNAMTEENLKKCFAHDVALLKVVGMNPVIVHGGGPQINDMLKRVGKQGAFIQGMRVTDAETMDVVEMVLGLINKEIVNLINQHGGRAVGLTGKDGSFIRAKKMLVRDKERGQEWVDLGQVGEIEGIDPALIELLETRDFIPVIAPVGVGSRGESYNINADLVAGGLALVLNAEKLILLTNTPGVLNKDGSLLTGLTAQEVDELIADGTISGGMIPKISSALDAVKSGVKTCHIIDGRVEHGLLLEVLTDEGVGTLIKAN.

Residues 67–68 (GG), R89, and N190 each bind substrate.

This sequence belongs to the acetylglutamate kinase family. ArgB subfamily.

The protein resides in the cytoplasm. The enzyme catalyses N-acetyl-L-glutamate + ATP = N-acetyl-L-glutamyl 5-phosphate + ADP. Its pathway is amino-acid biosynthesis; L-arginine biosynthesis; N(2)-acetyl-L-ornithine from L-glutamate: step 2/4. In terms of biological role, catalyzes the ATP-dependent phosphorylation of N-acetyl-L-glutamate. This is Acetylglutamate kinase from Nitrosospira multiformis (strain ATCC 25196 / NCIMB 11849 / C 71).